Reading from the N-terminus, the 251-residue chain is MEQNNCKIRTWFAKLALAQKVFLGVIPLFFICFVFVIADIVISLQNKGHIIEEIDKFTNQSNVMLLIYACWYVSKPKSHYLKNQQFFLSAFAYIIFTFLGYNVILAASQQAYSDKDAYSLASSVFLHVLAPIAFLVAGIVKMKTDKDVTFNHFWKSLGYFMIYPLVYGLYLATIPYVRGHYVSDDGKSTTYVVYGEITNTKDNPIVAWPVVICFLFIYFPLSFLAVYALQCKLLNRPLKAQFKCATNKCPK.

5 consecutive transmembrane segments (helical) span residues 22–42 (FLGV…DIVI), 86–106 (FFLS…VILA), 120–140 (LASS…AGIV), 157–177 (LGYF…IPYV), and 205–225 (IVAW…SFLA).

The protein resides in the cell membrane. This is an uncharacterized protein from Mycoplasma pneumoniae (strain ATCC 29342 / M129 / Subtype 1) (Mycoplasmoides pneumoniae).